The primary structure comprises 231 residues: Protein fmp52-2, mitochondrial (231 aa).

The N-terminal 46 residues, 1-46, are a transit peptide targeting the mitochondrion; it reads MTMTTAAVFGCTGAVGSQILATLLAIDTFPSVKTISRRLPNVQSPK.

It belongs to the FMP52 family.

The protein localises to the mitochondrion outer membrane. The sequence is that of Protein fmp52-2, mitochondrial (fmp522) from Neosartorya fischeri (strain ATCC 1020 / DSM 3700 / CBS 544.65 / FGSC A1164 / JCM 1740 / NRRL 181 / WB 181) (Aspergillus fischerianus).